A 152-amino-acid polypeptide reads, in one-letter code: Endoribonuclease YbeY (152 aa).

Zn(2+) contacts are provided by histidine 111, histidine 115, and histidine 121.

This sequence belongs to the endoribonuclease YbeY family. It depends on Zn(2+) as a cofactor.

It is found in the cytoplasm. Single strand-specific metallo-endoribonuclease involved in late-stage 70S ribosome quality control and in maturation of the 3' terminus of the 16S rRNA. In Pseudomonas fluorescens (strain ATCC BAA-477 / NRRL B-23932 / Pf-5), this protein is Endoribonuclease YbeY.